Here is a 739-residue protein sequence, read N- to C-terminus: Nucleoprotein (739 aa).

Positions 334–363 (VNVGEQYQQLREAATEAEKQLQQYAESREL) form a coiled coil. The segment at 415–646 (PKTSGHYDDD…QDSDNTQPEH (232 aa)) is disordered. 2 stretches are compositionally biased toward low complexity: residues 449–458 (SQDTTIPDVV) and 504–514 (KGGQQKNSQKG). Residues 520 to 530 (RQTQSRPTQNI) are compositionally biased toward polar residues. Over residues 567-579 (EEADPLDDADDET) the composition is skewed to acidic residues. Over residues 611–638 (YRDHSEKKELPQDERQDQDHTQEARNQD) the composition is skewed to basic and acidic residues.

The protein belongs to the filoviruses nucleoprotein family. Homooligomer. Homomultimerizes to form the nucleocapsid. Binds to viral genomic RNA. Interacts with VP35 and VP30 to form the nucleocapsid. Interacts with host PPP2R5C; this interaction leads to VP30 dephosphorylation and viral transcription. Interacts with VP24; this interaction facilitates nucleocapsid assembly and genome packaging. Interacts with matrix protein VP40; this interaction allows recruitment of the nucleocapsid into progeny virions. Interacts with host STAU1. Interacts with host NXF1 (via RNA-binding domain); this interaction recruits NXF1 to the inclusion bodies were viral replication takes place, probably to export viral mRNA-NXF1 complexes from these sites. Interacts with host CCDC92; this interaction sequesters NP in the host cytoplasm. Interacts with host TRIM14. Phosphorylated and O-glycosylated by host. Acetylated by host EP300 in vitro.

The protein localises to the virion. The protein resides in the host cytoplasm. Functionally, oligomerizes into helical capsid to encapsidate the viral genome, protecting it from nucleases and the cellular innate immune response. VP35 binds to and stabilizes monomeric NP, keeping it soluble. Upon virus replication, NP is recruited to bind cooperatively viral genomic RNA and VP35 is released. The encapsidated genomic RNA is termed the nucleocapsid and serves as template for transcription and replication. The nucleocapsid is helical with a pitch of 10.81 NP per turn and a diameter of about 22nm. Each NP binds to six nucleotides of viral genomic RNA, three being exposed to the solvant and three hidden into the nucleocapsid. Also recruits host PPP2R5C phosphatase to dephosphorylate VP30 and thereby promote viral transcription. Upon virion assembly and budding, NP binds to VP24 and possibly host STAU1. This chain is Nucleoprotein (NP), found in Zaire ebolavirus (strain Gabon-94) (ZEBOV).